Consider the following 324-residue polypeptide: Probable metal transport system membrane protein CPn_0346/CP_0414/CPj0346/CpB0353 (324 aa).

The next 10 helical transmembrane spans lie at 1–21, 39–59, 64–84, 94–114, 125–145, 165–185, 201–221, 226–246, 252–272, and 286–306; these read MALGPSPYYGVSFFQFFSVFF, IQIIVFLAISCSGAFAGTFLV, AMYANAVSHTVLFGLVCVCLF, GTLTLAAMATAMLTGFLIYFI, STALVFSLLFSLSLVLLVFMT, EDIFPVTIVILANAVITIFAF, LGIPIRLVDYLIIFQLSACLV, AVGVLMALAFLIIPSLIAKVI, SLMAWSLVFSIGTAFLAPASS, and SGISVVFLTMMYIVVKFISYF.

Belongs to the ABC-3 integral membrane protein family.

The protein resides in the cell inner membrane. Its function is as follows. Part of an ATP-driven transport system CPn_0346/CPn_0347/CPn_0348/CPn_0349 for a metal. The polypeptide is Probable metal transport system membrane protein CPn_0346/CP_0414/CPj0346/CpB0353 (Chlamydia pneumoniae (Chlamydophila pneumoniae)).